A 905-amino-acid polypeptide reads, in one-letter code: Cation-transporting ATPase pma1 (905 aa).

The next 4 helical transmembrane spans lie at 60–80 (FLLQ…TVKA), 81–101 (FLGS…NAII), 248–268 (FSHT…AVGW), and 283–303 (ALAV…TLAI). Asp333 functions as the 4-aspartylphosphate intermediate in the catalytic mechanism. The next 5 membrane-spanning stretches (helical) occupy residues 716–736 (ILIS…VLWL), 774–794 (LLHR…GMFE), 809–829 (MAIQ…SQLG), 848–868 (ILLL…QLPF), and 880–900 (WQQW…AILA).

Belongs to the cation transport ATPase (P-type) (TC 3.A.3) family. Type IIA subfamily.

It localises to the cell membrane. It carries out the reaction ATP + H2O = ADP + phosphate + H(+). In terms of biological role, could mediate calcium influx. The polypeptide is Cation-transporting ATPase pma1 (pma1) (Synechocystis sp. (strain ATCC 27184 / PCC 6803 / Kazusa)).